The primary structure comprises 415 residues: Amino acid decarboxylase lolD2 (415 aa).

At Lys62 the chain carries N6-(pyridoxal phosphate)lysine. Residues Ser194, Gly231, and 266–269 (EPGT) contribute to the pyridoxal 5'-phosphate site. 315 to 316 (IV) contacts substrate. Cys351 serves as the catalytic Proton donor; shared with dimeric partner. At Cys351 the chain carries S-nitrosocysteine. Residue Asp352 coordinates substrate. Tyr381 contributes to the pyridoxal 5'-phosphate binding site.

Belongs to the Orn/Lys/Arg decarboxylase class-II family. In terms of assembly, homodimer. The cofactor is pyridoxal 5'-phosphate.

It participates in alkaloid biosynthesis. In terms of biological role, amino acid decarboxylase; part of the gene cluster that mediates the biosynthesis of loline alkaloids, potent insecticidal agents composed of a pyrrolizidine ring system and an uncommon ether bridge linking carbons 2 and 7. Lolines are structurally differentiated by the various modifications of the L-amino group and include norloline, loline, N-methylloline, N-acetylloline, N-acetylnorloline, and N-formylloline. The first committed step is the condensation of O-acetyl-L-homoserine (derived from L-aspartic acid) and L-proline, probably catalyzed by the gamma-type pyridoxal 5'-phosphate(PLP)-dependent enzyme lolC, to give the diamino diacid, NACPP. Ensuing cyclization, decarboxylation, and acetylation steps yield 1-exo-acetamidopyrrolizidine (AcAP). LolO is required for installation of the ether bridge upon the pathway intermediate, 1-exo-acetamidopyrrolizidine (AcAP). In sequential 2-oxoglutarate- and O(2)-consuming steps, lolO removes hydrogens from C2 and C7 of AcAP to form both carbon-oxygen bonds in N-acetylnorloline (NANL), the precursor to all other lolines. The enzymes lolD, lolE, lolF and lolT have also been proposed to be involved in the ether-bridge installation. Further processing of the exocyclic moiety of NANL by fungal N-acetamidase (LolN), methyltransferase (LolM), and cytochrome P450 (LolP) enzymes, with occasional involvement of a plant acetyltransferase, generates the other known lolines. LolN transforms NANL to norlonine which is monomethylated and dimethylated to respectively lonine and N-methyllonine (NML) by lolM. LolP catalyzes hydroxylation of the methyl group in N-methylloline (NML) and further oxygenation to N-formylloline (NFL). A plant acetyltransferase is responsible for the acetylation of loline to form N-acetylloline (NAL). LolA might interact with aspartate kinase to prevent feedback inhibition of its activity by these end products and thereby promote production of L-homoserine from L-aspartate. The chain is Amino acid decarboxylase lolD2 from Epichloe uncinata (Endophyte fungus).